Consider the following 379-residue polypeptide: Alanine racemase (379 aa).

The active-site Proton acceptor; specific for D-alanine is the Lys41. N6-(pyridoxal phosphate)lysine is present on Lys41. Arg138 contacts substrate. The Proton acceptor; specific for L-alanine role is filled by Tyr260. Met319 provides a ligand contact to substrate.

This sequence belongs to the alanine racemase family. Pyridoxal 5'-phosphate serves as cofactor.

It catalyses the reaction L-alanine = D-alanine. It functions in the pathway amino-acid biosynthesis; D-alanine biosynthesis; D-alanine from L-alanine: step 1/1. Its function is as follows. Catalyzes the interconversion of L-alanine and D-alanine. May also act on other amino acids. This Rhizobium meliloti (strain 1021) (Ensifer meliloti) protein is Alanine racemase (alr).